The primary structure comprises 231 residues: 2-C-methyl-D-erythritol 4-phosphate cytidylyltransferase (231 aa).

This sequence belongs to the IspD/TarI cytidylyltransferase family. IspD subfamily.

It catalyses the reaction 2-C-methyl-D-erythritol 4-phosphate + CTP + H(+) = 4-CDP-2-C-methyl-D-erythritol + diphosphate. It participates in isoprenoid biosynthesis; isopentenyl diphosphate biosynthesis via DXP pathway; isopentenyl diphosphate from 1-deoxy-D-xylulose 5-phosphate: step 2/6. Catalyzes the formation of 4-diphosphocytidyl-2-C-methyl-D-erythritol from CTP and 2-C-methyl-D-erythritol 4-phosphate (MEP). This Xylella fastidiosa (strain M23) protein is 2-C-methyl-D-erythritol 4-phosphate cytidylyltransferase.